A 228-amino-acid chain; its full sequence is Cytidylate kinase (228 aa).

10–18 (GPSGSGKGT) contributes to the ATP binding site.

Belongs to the cytidylate kinase family. Type 1 subfamily.

Its subcellular location is the cytoplasm. It carries out the reaction CMP + ATP = CDP + ADP. The catalysed reaction is dCMP + ATP = dCDP + ADP. This chain is Cytidylate kinase, found in Acinetobacter baumannii (strain SDF).